The chain runs to 420 residues: Protein-lysine N-trimethyltransferase SMYD5 (420 aa).

In terms of domain architecture, SET spans 29 to 358 (AEARFISSAK…AGEEICISYL (330 aa)). The MYND-type zinc finger occupies 104–142 (PEQCSIRKDLHQQCPRCQVTYCSAECRQAALEQYHQVLC). Position 357 (tyrosine 357) interacts with S-adenosyl-L-methionine. A disordered region spans residues 392 to 420 (DDPDVTSDEEEEAEGETDDAELEDEMTDV).

This sequence belongs to the class V-like SAM-binding methyltransferase superfamily.

Its subcellular location is the cytoplasm. The enzyme catalyses L-lysyl-[protein] + 3 S-adenosyl-L-methionine = N(6),N(6),N(6)-trimethyl-L-lysyl-[protein] + 3 S-adenosyl-L-homocysteine + 3 H(+). It carries out the reaction L-lysyl(20)-[histone H4] + 3 S-adenosyl-L-methionine = N(6),N(6),N(6)-trimethyl-L-lysyl(20)-[histone H4] + 3 S-adenosyl-L-homocysteine + 3 H(+). The catalysed reaction is L-lysyl(36)-[histone H3] + 3 S-adenosyl-L-methionine = N(6),N(6),N(6)-trimethyl-L-lysyl(36)-[histone H3] + 3 S-adenosyl-L-homocysteine + 3 H(+). Protein-lysine N-trimethyltransferase that specifically catalyzes trimethylation of 'Lys-22' of the RPL40/eL40 subunit of the 60S ribosome, thereby promoting translation elongation and protein synthesis. May also act as a histone methyltransferase in the context of histone octamers, but not on nucleosome substrates: trimethylates 'Lys-36' of histone H3 and 'Lys-20' of histone H4 to form H3K36me3 and H4K20me3, respectively. The histone methyltransferase activity, which is independent of its SET domain, is however unsure in vivo. The polypeptide is Protein-lysine N-trimethyltransferase SMYD5 (SMYD5) (Gallus gallus (Chicken)).